The following is a 296-amino-acid chain: MSDAEVPPAARGQAALLGPAEVRALAEEFGVRPTKQLGQNFVHDANTVRRIVATAGVGREDTVLEVGPGLGSLTLALLDVVDRVIAVEIDPNLAARLPVTVADRAPDLADRLTVVGADAMRVKPSEIPGEPTALVANLPYNVAVPVLLHLFSELPSLRTALVMVQAEVADRLAASPGSKIYGVPSVKANFFGAVRRAGAVGRAVFWPVPKVESGLVRIDRYAEPPWPVDDENRRRVFAVIDAAFAQRRKTLRAALGGWAGSPAEAERRLLEAGIPPSSRGETLDAAAFVRLAATHP.

S-adenosyl-L-methionine contacts are provided by Asn-40, Val-42, Gly-67, Glu-88, Asp-118, and Asn-137.

The protein belongs to the class I-like SAM-binding methyltransferase superfamily. rRNA adenine N(6)-methyltransferase family. RsmA subfamily.

It is found in the cytoplasm. It catalyses the reaction adenosine(1518)/adenosine(1519) in 16S rRNA + 4 S-adenosyl-L-methionine = N(6)-dimethyladenosine(1518)/N(6)-dimethyladenosine(1519) in 16S rRNA + 4 S-adenosyl-L-homocysteine + 4 H(+). In terms of biological role, specifically dimethylates two adjacent adenosines (A1518 and A1519) in the loop of a conserved hairpin near the 3'-end of 16S rRNA in the 30S particle. May play a critical role in biogenesis of 30S subunits. This chain is Ribosomal RNA small subunit methyltransferase A, found in Rhodococcus opacus (strain B4).